A 231-amino-acid polypeptide reads, in one-letter code: dTTP/UTP pyrophosphatase (231 aa).

Asp-85 functions as the Proton acceptor in the catalytic mechanism.

This sequence belongs to the Maf family. YhdE subfamily. Requires a divalent metal cation as cofactor.

It is found in the cytoplasm. The catalysed reaction is dTTP + H2O = dTMP + diphosphate + H(+). It catalyses the reaction UTP + H2O = UMP + diphosphate + H(+). Nucleoside triphosphate pyrophosphatase that hydrolyzes dTTP and UTP. May have a dual role in cell division arrest and in preventing the incorporation of modified nucleotides into cellular nucleic acids. This Psychrobacter arcticus (strain DSM 17307 / VKM B-2377 / 273-4) protein is dTTP/UTP pyrophosphatase.